The primary structure comprises 147 residues: Large ribosomal subunit protein bL9 (147 aa).

This sequence belongs to the bacterial ribosomal protein bL9 family.

Its function is as follows. Binds to the 23S rRNA. The polypeptide is Large ribosomal subunit protein bL9 (Clostridium botulinum (strain 657 / Type Ba4)).